The following is a 21-amino-acid chain: Agglutinin beta-1 chain (21 aa).

Positions 1–10 (NGPNGKSQSI) are enriched in polar residues. The disordered stretch occupies residues 1–21 (NGPNGKSQSIIVGPWGDRVTN).

The protein belongs to the jacalin lectin family. In terms of assembly, formed of four alpha chains and four beta chains.

D-galactose-specific lectin, binds the T-antigen structure Gal-beta1,3-GalNAc. The protein is Agglutinin beta-1 chain of Maclura pomifera (Osage orange).